The chain runs to 284 residues: Pantothenate synthetase (284 aa).

Position 30–37 (30–37 (MGNLHDGH)) interacts with ATP. Catalysis depends on His37, which acts as the Proton donor. (R)-pantoate is bound at residue Gln61. Gln61 provides a ligand contact to beta-alanine. 149–152 (GEKD) is an ATP binding site. Gln155 provides a ligand contact to (R)-pantoate. ATP-binding positions include Ile178 and 186-189 (LSSR).

Belongs to the pantothenate synthetase family. In terms of assembly, homodimer.

The protein localises to the cytoplasm. It catalyses the reaction (R)-pantoate + beta-alanine + ATP = (R)-pantothenate + AMP + diphosphate + H(+). It participates in cofactor biosynthesis; (R)-pantothenate biosynthesis; (R)-pantothenate from (R)-pantoate and beta-alanine: step 1/1. Functionally, catalyzes the condensation of pantoate with beta-alanine in an ATP-dependent reaction via a pantoyl-adenylate intermediate. The protein is Pantothenate synthetase of Salmonella newport (strain SL254).